Reading from the N-terminus, the 205-residue chain is Probable GTP-binding protein EngB (205 aa).

Residues 27–201 (TGIEIAFAGR…AAKLDFWFSP (175 aa)) form the EngB-type G domain. GTP-binding positions include 35-42 (GRSNAGKS), 62-66 (GRTQL), 80-83 (DLPG), 147-150 (TKAD), and 180-182 (FSA). Residues S42 and T64 each contribute to the Mg(2+) site.

This sequence belongs to the TRAFAC class TrmE-Era-EngA-EngB-Septin-like GTPase superfamily. EngB GTPase family. Mg(2+) serves as cofactor.

Functionally, necessary for normal cell division and for the maintenance of normal septation. The protein is Probable GTP-binding protein EngB of Haemophilus influenzae (strain 86-028NP).